A 337-amino-acid chain; its full sequence is Transcription initiation factor IIB (337 aa).

A TFIIB-type zinc finger spans residues 37-68 (EKAVCPECGSRNLVHDYERAELVCGDCGLVID). The Zn(2+) site is built by Cys41, Cys44, Cys60, and Cys63. Repeat copies occupy residues 154 to 237 (SELD…SREL) and 248 to 329 (DYVP…ELAE).

Belongs to the TFIIB family.

Stabilizes TBP binding to an archaeal box-A promoter. Also responsible for recruiting RNA polymerase II to the pre-initiation complex (DNA-TBP-TFIIB). The polypeptide is Transcription initiation factor IIB (Methanosarcina mazei (Methanosarcina frisia)).